A 240-amino-acid chain; its full sequence is Ribosomal RNA small subunit methyltransferase G (240 aa).

S-adenosyl-L-methionine contacts are provided by residues Gly79, Phe84, Ala130–Glu131, and Arg149.

This sequence belongs to the methyltransferase superfamily. RNA methyltransferase RsmG family.

It localises to the cytoplasm. Specifically methylates the N7 position of a guanine in 16S rRNA. The polypeptide is Ribosomal RNA small subunit methyltransferase G (Lactobacillus helveticus (strain DPC 4571)).